The chain runs to 819 residues: MNNSPTLSNTRNRKNNNNNSNSNSNSNNNNNNNNNNNNNSNNNNNNNNNVNRNVNNRNNNNNNIINVNNNVSSTTMNMAKDFMNWNDGIIEREDTQLQQQKDRCFKILKKSTIACIVLLFISCTIIYSMTQYPSVSGGDAGELIVVAHQFGVAHPPGYPLFTFLGYIFSHIIPSNTLSVAWKISFMSSMIGSIASIFIYLTVYLWVNNHWCGLLSAYMFTFSPLIWMYQIQGEVFSMNNMFVAMLMFLGVWYTRVRIFENERYNTAFWTSERIAYLSAFSCAIGLTNQHTLVLIVIPFAFWLMFISGRDQLWNIKILSNLVFYTLIGLSPYLLLFITPKLNRVKYSWGNTSTLRGFIKHFLREEYGTLQLYGGDGGVISLFTKISIYIENLIIQFGYIGLALSLIGLLNLLLGYNIRTFKWKSFGTMIIFSFLFYITFFFNLCNLPIDKPLYRGVFLRFFMQPNVIISITMGLGIKSIFGFLNRIQRDGGTAATTTTTISKIQKYLLPIIIILLVGNQIGFNYNLQDQSDNYSFYDYGHSVLDGLPRNTLLLVGGDLVTNVPMYLHLCEKVRPDIDILSMEIMSWEWFKITQSPLFQRVKFPGNVYHPYIPDGYSLKDFLDANINDRPIYIGGDFKSGDSSFQNDYYTISKGLTSQIIPKKDSHKFNTFKIIKTTFSTFPSFHIPNNTEKYPNDSWEHFMMEEMAVSLERAAETLLKEYLSQQNTESFKALELSVEILEKALTYVNDKCWSLKHLGICFDHLRYRVVQNVNNNNQQAQNKASNYSKQLLYFWKKYINQCTHEENTDQDWETIKKVIQLI.

Polar residues predominate over residues 1 to 10 (MNNSPTLSNT). Positions 1–68 (MNNSPTLSNT…NNNNNIINVN (68 aa)) are disordered. Over residues 15 to 68 (NNNNNSNSNSNSNNNNNNNNNNNNNSNNNNNNNNNVNRNVNNRNNNNNNIINVN) the composition is skewed to low complexity. Residues asparagine 18, asparagine 38, and asparagine 70 are each glycosylated (N-linked (GlcNAc...) asparagine). The next 7 membrane-spanning stretches (helical) occupy residues 113-133 (IACI…TQYP), 152-172 (VAHP…SHII), 185-205 (FMSS…VYLW), 210-230 (WCGL…MYQI), 232-252 (GEVF…GVWY), 285-305 (LTNQ…LMFI), and 316-336 (ILSN…LLFI). An N-linked (GlcNAc...) asparagine glycan is attached at asparagine 349. 4 helical membrane-spanning segments follow: residues 391–411 (LIIQ…LNLL), 427–447 (MIIF…NLPI), 459–479 (FFMQ…KSIF), and 505–525 (YLLP…NYNL). Residues asparagine 531, asparagine 686, asparagine 693, and asparagine 783 are each glycosylated (N-linked (GlcNAc...) asparagine).

Belongs to the glycosyltransferase 117 (GT117) family.

The protein resides in the endoplasmic reticulum membrane. The enzyme catalyses a di-trans,poly-cis-dolichyl beta-D-mannosyl phosphate + L-seryl-[protein] = 3-O-(alpha-D-mannosyl)-L-seryl-[protein] + a di-trans,poly-cis-dolichyl phosphate + H(+). It catalyses the reaction a di-trans,poly-cis-dolichyl beta-D-mannosyl phosphate + L-threonyl-[protein] = 3-O-(alpha-D-mannosyl)-L-threonyl-[protein] + a di-trans,poly-cis-dolichyl phosphate + H(+). In terms of biological role, O-mannosyl-transferase that transfers mannosyl residues to the hydroxyl group of serine or threonine residues of proteins. This Dictyostelium discoideum (Social amoeba) protein is Protein O-mannosyl-transferase tmem260.